The chain runs to 255 residues: Ribosomal RNA small subunit methyltransferase A (255 aa).

S-adenosyl-L-methionine is bound by residues Asn-12, Leu-14, Gly-39, Glu-60, Asp-84, and Asn-102.

Belongs to the class I-like SAM-binding methyltransferase superfamily. rRNA adenine N(6)-methyltransferase family. RsmA subfamily.

The protein resides in the cytoplasm. The enzyme catalyses adenosine(1518)/adenosine(1519) in 16S rRNA + 4 S-adenosyl-L-methionine = N(6)-dimethyladenosine(1518)/N(6)-dimethyladenosine(1519) in 16S rRNA + 4 S-adenosyl-L-homocysteine + 4 H(+). Specifically dimethylates two adjacent adenosines (A1518 and A1519) in the loop of a conserved hairpin near the 3'-end of 16S rRNA in the 30S particle. May play a critical role in biogenesis of 30S subunits. The protein is Ribosomal RNA small subunit methyltransferase A of Methylobacillus flagellatus (strain ATCC 51484 / DSM 6875 / VKM B-1610 / KT).